A 291-amino-acid chain; its full sequence is Putative transport permease ycf38 (291 aa).

The next 6 helical transmembrane spans lie at Ala47–Phe67, Ser87–Phe107, Phe135–Gly155, Met165–Leu185, Leu195–Pro215, and Ile262–Val282. In terms of domain architecture, ABC transmembrane type-2 spans Ala47–Lys289.

It belongs to the ABC-2 integral membrane protein family.

It is found in the plastid. The protein localises to the chloroplast membrane. The chain is Putative transport permease ycf38 (ycf38) from Pyropia yezoensis (Susabi-nori).